We begin with the raw amino-acid sequence, 442 residues long: Histidine--tRNA ligase (442 aa).

Belongs to the class-II aminoacyl-tRNA synthetase family. As to quaternary structure, homodimer.

Its subcellular location is the cytoplasm. The catalysed reaction is tRNA(His) + L-histidine + ATP = L-histidyl-tRNA(His) + AMP + diphosphate + H(+). The sequence is that of Histidine--tRNA ligase (hisS) from Helicobacter pylori (strain J99 / ATCC 700824) (Campylobacter pylori J99).